The sequence spans 2224 residues: Coagulation factor V (2224 aa).

Positions 1–28 are cleaved as a signal peptide; that stretch reads MFPGCPRLWVLVVLGTSWVGWGSQGTEA. 4 Plastocyanin-like domains span residues 30–193, 203–329, 348–526, and 536–684; these read QLRQ…LLIC, TQKT…IKNC, KRWE…LLIC, and IQRA…DVKC. 2 F5/8 type A domains span residues 30 to 329 and 348 to 684; these read QLRQ…IKNC and KRWE…DVKC. Asparagine 51 and asparagine 55 each carry an N-linked (GlcNAc...) asparagine glycan. Positions 139 and 140 each coordinate Ca(2+). Cysteine 167 and cysteine 193 are disulfide-bonded. 5 N-linked (GlcNAc...) asparagine glycosylation sites follow: asparagine 239, asparagine 297, asparagine 382, asparagine 460, and asparagine 468. Cysteine 248 and cysteine 329 are oxidised to a cystine. A disulfide bridge connects residues cysteine 500 and cysteine 526. Residue asparagine 554 is glycosylated (N-linked (GlcNAc...) asparagine). An intrachain disulfide couples cysteine 603 to cysteine 684. Threonine 640 is subject to Phosphothreonine. Residues 692-1573 are b; the sequence is SYEIFEPPES…PDNIAAWYLR (882 aa). Sulfotyrosine is present on residues tyrosine 693, tyrosine 724, and tyrosine 726. Positions 738–1573 are cleaved as a propeptide — activation peptide (connecting region); sequence SFRNSSLNQE…PDNIAAWYLR (836 aa). N-linked (GlcNAc...) asparagine glycans are attached at residues asparagine 741, asparagine 752, asparagine 760, asparagine 776, and asparagine 782. The O-linked (GalNAc...) threonine glycan is linked to threonine 805. N-linked (GlcNAc...) asparagine glycosylation is present at asparagine 821. Over residues 822 to 831 the composition is skewed to polar residues; it reads SSTAEHSSPY. The interval 822 to 842 is disordered; that stretch reads SSTAEHSSPYSEDPIEDPLQP. Position 859 is a phosphoserine; by FAM20C (serine 859). Residues 894–927 form a disordered region; the sequence is LSQDTGSPSGMRPWEDLPSQDTGSPSRMRPWKDP. A run of 2 repeats spans residues 895-911 and 912-928. The interval 895–928 is 2 X 17 AA tandem repeats; it reads SQDTGSPSGMRPWEDLPSQDTGSPSRMRPWKDPP. N-linked (GlcNAc...) asparagine glycosylation is found at asparagine 938 and asparagine 977. 2 disordered regions span residues 982–1001 and 1029–1048; these read WGES…HPKF and TRKK…PRTF. The segment covering 1029 to 1040 has biased composition (basic residues); sequence TRKKKKEKHTHH. Residues asparagine 1074, asparagine 1083, asparagine 1103, and asparagine 1106 are each glycosylated (N-linked (GlcNAc...) asparagine). The interval 1097 to 1157 is disordered; sequence LPDHNQNSSN…SSSPELSEML (61 aa). A compositionally biased stretch (polar residues) spans 1099-1111; that stretch reads DHNQNSSNDTGQA. Over residues 1139–1154 the composition is skewed to low complexity; the sequence is HSTSDPSHRSSSPELS. 35 repeat units span residues 1185 to 1193, 1194 to 1202, 1203 to 1211, 1212 to 1220, 1221 to 1229, 1230 to 1238, 1239 to 1247, 1248 to 1256, 1257 to 1265, 1266 to 1274, 1275 to 1283, 1284 to 1292, 1293 to 1301, 1302 to 1310, 1311 to 1319, 1320 to 1328, 1329 to 1337, 1338 to 1346, 1347 to 1355, 1356 to 1364, 1365 to 1373, 1374 to 1382, 1383 to 1391, 1392 to 1400, 1401 to 1409, 1410 to 1418, 1419 to 1427, 1428 to 1436, 1437 to 1445, 1446 to 1454, 1455 to 1463, 1464 to 1472, 1473 to 1481, 1482 to 1490, and 1493 to 1501. The interval 1185-1501 is 35 X 9 AA approximate tandem repeats of [TNP]-L-S-P-D-L-S-Q-T; sequence VISPDLSQVT…SPSSPTLNDT (317 aa). The segment at 1341 to 1367 is disordered; it reads PELSQTNLSPALGQMPLSPDPSHTTLS. The N-linked (GlcNAc...) asparagine glycan is linked to asparagine 1479. Residue asparagine 1499 is glycosylated (N-linked (GlcNAc...) asparagine). Sulfotyrosine is present on residues tyrosine 1522, tyrosine 1538, and tyrosine 1543. Residue asparagine 1559 is glycosylated (N-linked (GlcNAc...) asparagine). Plastocyanin-like domains are found at residues 1578–1751 and 1761–1907; these read NRRN…LLIC and NMPM…DRDC. The region spanning 1578 to 1907 is the F5/8 type A 3 domain; that stretch reads NRRNYYIAAE…TPFLIMDRDC (330 aa). Residue tyrosine 1593 is modified to Sulfotyrosine. Asparagine 1703 is a glycosylation site (N-linked (GlcNAc...) asparagine). Cysteines 1725 and 1751 form a disulfide. Histidine 1843 and histidine 1845 together coordinate Cu cation. Cystine bridges form between cysteine 1907–cysteine 2061 and cysteine 2066–cysteine 2221. F5/8 type C domains follow at residues 1907-2061 and 2066-2221; these read CRMP…LQGC and CSTP…LFGC. N-linked (GlcNAc...) asparagine glycans are attached at residues asparagine 2010 and asparagine 2209.

This sequence belongs to the multicopper oxidase family. As to quaternary structure, factor Va, the activated form of factor V, is composed of a heavy chain and a light chain, non-covalently bound. The interaction between the two chains is calcium-dependent. Forms heterodimer with SERPINA5. Post-translationally, thrombin activates factor V proteolytically to the active cofactor, factor Va (formation of a heavy chain at the N-terminus and a light chain at the C-terminus). In terms of processing, sulfation is required for efficient thrombin cleavage and activation and for full procoagulant activity. Activated protein C inactivates factor V and factor Va by proteolytic degradation. Post-translationally, phosphorylated by FAM20C in the extracellular medium. As to expression, plasma.

Its subcellular location is the secreted. With respect to regulation, inhibited by SERPINA5. Its function is as follows. Central regulator of hemostasis. It serves as a critical cofactor for the prothrombinase activity of factor Xa that results in the activation of prothrombin to thrombin. The chain is Coagulation factor V (F5) from Homo sapiens (Human).